Consider the following 121-residue polypeptide: Large ribosomal subunit protein uL18 (121 aa).

The protein belongs to the universal ribosomal protein uL18 family. In terms of assembly, part of the 50S ribosomal subunit; part of the 5S rRNA/L5/L18/L25 subcomplex. Contacts the 5S and 23S rRNAs.

Its function is as follows. This is one of the proteins that bind and probably mediate the attachment of the 5S RNA into the large ribosomal subunit, where it forms part of the central protuberance. The polypeptide is Large ribosomal subunit protein uL18 (Thermoanaerobacter pseudethanolicus (strain ATCC 33223 / 39E) (Clostridium thermohydrosulfuricum)).